The chain runs to 500 residues: NADH-quinone oxidoreductase subunit N (500 aa).

A run of 14 helical transmembrane segments spans residues 13–33 (VMMP…IDLF), 42–62 (LLGL…LSLW), 79–99 (FAKS…LLSI), 111–131 (GEFY…ASSG), 133–153 (LITL…LVAI), 168–188 (VITG…IFGF), 211–231 (YVLS…LASA), 245–265 (TTPV…VIVL), 281–301 (ASML…TMII), 321–341 (VAHA…MFEA), 342–362 (IWFY…ILQV), 386–406 (AIAM…AGFI), 424–444 (VLAS…FGIF), and 461–481 (PPGV…LGVF).

It belongs to the complex I subunit 2 family. In terms of assembly, NDH-1 is composed of 14 different subunits. Subunits NuoA, H, J, K, L, M, N constitute the membrane sector of the complex.

Its subcellular location is the cell membrane. It carries out the reaction a quinone + NADH + 5 H(+)(in) = a quinol + NAD(+) + 4 H(+)(out). Its function is as follows. NDH-1 shuttles electrons from NADH, via FMN and iron-sulfur (Fe-S) centers, to quinones in the respiratory chain. The immediate electron acceptor for the enzyme in this species is believed to be a menaquinone. Couples the redox reaction to proton translocation (for every two electrons transferred, four hydrogen ions are translocated across the cytoplasmic membrane), and thus conserves the redox energy in a proton gradient. This Anoxybacillus flavithermus (strain DSM 21510 / WK1) protein is NADH-quinone oxidoreductase subunit N.